Consider the following 529-residue polypeptide: uncharacterized protein (529 aa).

The active-site Nucleophile is the D389. E392 is a catalytic residue. Residue D459 is the Proton donor of the active site.

It belongs to the glycosyl hydrolase 31 family.

This is an uncharacterized protein from Pseudescherichia vulneris (Escherichia vulneris).